A 985-amino-acid polypeptide reads, in one-letter code: Alpha-glucosidase (985 aa).

The signal sequence occupies residues 1–25; that stretch reads MVKLTHLLARAWLVPLAYGASQSLL. O-linked (Man) threonine glycosylation occurs at Thr-36. Asn-124, Asn-143, Asn-218, Asn-347, and Asn-422 each carry an N-linked (GlcNAc...) asparagine glycan. Asp-490 functions as the Nucleophile in the catalytic mechanism. Residue Glu-493 is part of the active site. N-linked (GlcNAc...) asparagine glycosylation is found at Asn-506, Asn-534, and Asn-537. Residues Ser-545 and Ser-550 are each glycosylated (O-linked (Man) serine). O-linked (Man) threonine glycosylation occurs at Thr-559. Ser-560 carries an O-linked (Man) serine glycan. O-linked (Man) threonine glycosylation is present at Thr-561. An O-linked (Man) serine glycan is attached at Ser-562. Residue Thr-571 is glycosylated (O-linked (Man) threonine). 2 N-linked (GlcNAc...) asparagine glycosylation sites follow: Asn-601 and Asn-623. Asp-660 serves as the catalytic Proton donor. N-linked (GlcNAc...) asparagine glycans are attached at residues Asn-835 and Asn-881. The O-linked (Man) serine glycan is linked to Ser-895. Asn-899, Asn-957, and Asn-970 each carry an N-linked (GlcNAc...) asparagine glycan.

This sequence belongs to the glycosyl hydrolase 31 family. Post-translationally, the O-linked saccharide is not identified, but is probably mannose.

It carries out the reaction Hydrolysis of terminal, non-reducing (1-&gt;4)-linked alpha-D-glucose residues with release of alpha-D-glucose.. In terms of biological role, hydrolyzes malto-oligosaccharides, but has a low activity toward soluble starch. The sequence is that of Alpha-glucosidase (aglA) from Aspergillus niger.